Reading from the N-terminus, the 147-residue chain is Transcriptional repressor NrdR (147 aa).

Residues 3 to 34 (CLFCRSDDTKVIDSRTSEDGISIRRRRECQLC) fold into a zinc finger. Positions 46-136 (LTVIKRNGTS…VYQDFDSLED (91 aa)) constitute an ATP-cone domain.

Belongs to the NrdR family. Zn(2+) is required as a cofactor.

Functionally, negatively regulates transcription of bacterial ribonucleotide reductase nrd genes and operons by binding to NrdR-boxes. The polypeptide is Transcriptional repressor NrdR (Tropheryma whipplei (strain TW08/27) (Whipple's bacillus)).